Reading from the N-terminus, the 137-residue chain is Small ribosomal subunit protein uS11 (137 aa).

Over residues 1-11 (MPPKSRSTGPK) the composition is skewed to polar residues. Disordered regions lie at residues 1 to 28 (MPPK…PHGA) and 117 to 137 (TISD…RRRV). A compositionally biased stretch (basic residues) spans 12–21 (KTQKARRRDK).

Belongs to the universal ribosomal protein uS11 family. As to quaternary structure, part of the 30S ribosomal subunit. Interacts with proteins S7 and S18. Binds to IF-3.

Located on the platform of the 30S subunit, it bridges several disparate RNA helices of the 16S rRNA. Forms part of the Shine-Dalgarno cleft in the 70S ribosome. In Rhodococcus opacus (strain B4), this protein is Small ribosomal subunit protein uS11.